Reading from the N-terminus, the 311-residue chain is Cytosolic Fe-S cluster assembly factor Nubp1 homolog (311 aa).

[4Fe-4S] cluster is bound by residues Cys-9, Cys-23, Cys-26, and Cys-32. 63-70 is a binding site for ATP; it reads GKGGVGKS. [4Fe-4S] cluster is bound by residues Cys-240 and Cys-243.

Belongs to the Mrp/NBP35 ATP-binding proteins family. NUBP1/NBP35 subfamily. In terms of assembly, heterotetramer of 2 Nubp1 and 2 Nubp2 chains. [4Fe-4S] cluster serves as cofactor.

The protein resides in the cytoplasm. Component of the cytosolic iron-sulfur (Fe/S) protein assembly (CIA) machinery. Required for maturation of extramitochondrial Fe-S proteins. The Nubp1-Nubp2 heterotetramer forms a Fe-S scaffold complex, mediating the de novo assembly of an Fe-S cluster and its transfer to target apoproteins. The sequence is that of Cytosolic Fe-S cluster assembly factor Nubp1 homolog from Drosophila pseudoobscura pseudoobscura (Fruit fly).